The primary structure comprises 217 residues: Flagellin B2 (217 aa).

Residues 1–12 (MKVFEFLKGKRG) constitute a propeptide that is removed on maturation.

The protein belongs to the archaeal flagellin family.

The protein resides in the archaeal flagellum. Its function is as follows. Flagellin is the subunit protein which polymerizes to form the filaments of archaeal flagella. The sequence is that of Flagellin B2 (flaB2) from Methanocaldococcus jannaschii (strain ATCC 43067 / DSM 2661 / JAL-1 / JCM 10045 / NBRC 100440) (Methanococcus jannaschii).